The following is a 128-amino-acid chain: Protein SOB FIVE-LIKE 3 (128 aa).

Disordered regions lie at residues methionine 1–glutamate 26 and lysine 54–lysine 128. Residues serine 8 to serine 18 are compositionally biased toward polar residues. The short motif at serine 11–tyrosine 16 is the SOFL-A element. Residues serine 59 to proline 68 carry the SOFL-B motif. Positions arginine 80–asparagine 104 are enriched in basic and acidic residues. The Nuclear localization signal motif lies at arginine 111–serine 118.

Belongs to the SOFL plant protein family. Expressed in seedlings, roots, flowers and siliques.

The protein resides in the cytoplasm. It is found in the nucleus. Involved in cytokinin-mediated development. This is Protein SOB FIVE-LIKE 3 from Arabidopsis thaliana (Mouse-ear cress).